We begin with the raw amino-acid sequence, 350 residues long: Carbamoyl dehydratase HypE (350 aa).

An S-carbamoylcysteine modification is found at Cys-350. Cys-350 carries the post-translational modification S-cyanocysteine.

The protein belongs to the HypE family. Post-translationally, modified by HypF, which adds a carboxamido group to the thiolate of the C-terminal cysteine, yielding a protein-S-carboxamide. The carboxamido group is then dehydrated by HypE itself to yield a protein-thiocyanate.

It carries out the reaction C-terminal S-carboxamide-L-cysteinyl-[HypE protein] + ATP = C-terminal S-cyanate-L-cysteinyl-[HypE protein] + ADP + phosphate + H(+). Its pathway is protein modification; [NiFe] hydrogenase maturation. Functionally, involved in the maturation of [NiFe] hydrogenases. Along with HypF, it catalyzes the synthesis of the CN ligands of the active site iron of [NiFe]-hydrogenases. HypE catalyzes the ATP-dependent dehydration of the carboxamido group attached to its C-terminal cysteine to a cyano group. The protein is Carbamoyl dehydratase HypE of Rhizobium leguminosarum bv. viciae.